The sequence spans 210 residues: MSPSQDPSLENYRAIADGIATLFFPHAEVVLHDLRSQRVDYIANNLSKREVGDDSALEDMLEGDSDERNIGPYEKLNWDGQKIRSVSTVLRDSAGQPLAVLCINLNISLFESAKAALDLFLSPSKLIPQPDALFRDDWQERINTFLHGWLRQRQLGLNLLTREHKRELVLALHAEGAFKGKSAANYVANVLNMGRATVYKHLKELKEGGD.

The protein belongs to the DauR family.

Its function is as follows. DauR represses the dauBAR operon. The sequence is that of Transcriptional regulator DauR from Pseudomonas aeruginosa (strain ATCC 15692 / DSM 22644 / CIP 104116 / JCM 14847 / LMG 12228 / 1C / PRS 101 / PAO1).